The chain runs to 354 residues: MSRIAVAMSGGVDSSVVAALLQQQGHEVIGITMQLFEPCSSGPGTPAHDGAQVAAQLGIPHHLLRLEPQFRDLIIDNFIDQYRQGQTPNPCILCNRLIKFGLLLEQARELGAELLATGHYVRRTVGPDGLCHLRTAANQAKDQSYFLYSLSQQQLRQVIFPLGEIASKDEVRSLATGFGLAVATKGDSQEVCFIPNDDYAAFLEQQGIKASPGNIVHIGGQVLGRHSGTHRYTIGQRKGLGIGWSEPLYVLEIDSSRNLIVVGEQQHLLKAGLIGADISWIIPPPATSFNTTCKIRYRHQPVPCRVELLADDQCRVLFDEAQRSVTPGQFVVFYQDDQVLGGGRIQAACTAEQP.

ATP contacts are provided by residues 7 to 14 and Met33; that span reads AMSGGVDS. The active-site Nucleophile is the Cys94. Cys94 and Cys192 are oxidised to a cystine. Gly118 is a binding site for ATP. An interaction with tRNA region spans residues 141 to 143; the sequence is KDQ. Catalysis depends on Cys192, which acts as the Cysteine persulfide intermediate. The interaction with tRNA stretch occupies residues 296-297; it reads RY.

This sequence belongs to the MnmA/TRMU family.

Its subcellular location is the cytoplasm. It catalyses the reaction S-sulfanyl-L-cysteinyl-[protein] + uridine(34) in tRNA + AH2 + ATP = 2-thiouridine(34) in tRNA + L-cysteinyl-[protein] + A + AMP + diphosphate + H(+). Functionally, catalyzes the 2-thiolation of uridine at the wobble position (U34) of tRNA, leading to the formation of s(2)U34. The polypeptide is tRNA-specific 2-thiouridylase MnmA (Trichlorobacter lovleyi (strain ATCC BAA-1151 / DSM 17278 / SZ) (Geobacter lovleyi)).